Reading from the N-terminus, the 272-residue chain is HMP-PP phosphatase (272 aa).

The active-site Nucleophile is Asp8. Positions 8, 10, and 212 each coordinate Mg(2+).

The protein belongs to the HAD-like hydrolase superfamily. Cof family. The cofactor is Mg(2+).

It catalyses the reaction 4-amino-2-methyl-5-(diphosphooxymethyl)pyrimidine + H2O = 4-amino-2-methyl-5-(phosphooxymethyl)pyrimidine + phosphate + H(+). Functionally, catalyzes the hydrolysis of 4-amino-2-methyl-5-hydroxymethylpyrimidine pyrophosphate (HMP-PP) to 4-amino-2-methyl-5-hydroxymethylpyrimidine phosphate (HMP-P). The sequence is that of HMP-PP phosphatase from Salmonella enteritidis PT4 (strain P125109).